Consider the following 308-residue polypeptide: Homoserine O-succinyltransferase (308 aa).

Cys-142 functions as the Acyl-thioester intermediate in the catalytic mechanism. Positions 163 and 192 each coordinate substrate. The active-site Proton acceptor is the His-235. Glu-237 is an active-site residue. Residue Arg-249 coordinates substrate.

Belongs to the MetA family.

It is found in the cytoplasm. It catalyses the reaction L-homoserine + succinyl-CoA = O-succinyl-L-homoserine + CoA. The protein operates within amino-acid biosynthesis; L-methionine biosynthesis via de novo pathway; O-succinyl-L-homoserine from L-homoserine: step 1/1. Its function is as follows. Transfers a succinyl group from succinyl-CoA to L-homoserine, forming succinyl-L-homoserine. The polypeptide is Homoserine O-succinyltransferase (Pseudoalteromonas atlantica (strain T6c / ATCC BAA-1087)).